We begin with the raw amino-acid sequence, 725 residues long: Gamma-tubulin complex component 5 (725 aa).

The tract at residues 222 to 246 (TENEEKMSDNASASSGSDQGPSSRQ) is disordered. Residues 232–244 (ASASSGSDQGPSS) are compositionally biased toward low complexity.

Belongs to the TUBGCP family. As to quaternary structure, component of the gamma-tubulin ring complex (gTuRC) consisting of TUBGCP2, TUBGCP3, TUBGCP4, TUBGCP5 and TUBGCP6 and gamma-tubulin TUBG1 or TUBG2. TUBGCP2, TUBGCP3, TUBGCP4, TUBGCP5 and TUBGCP6 assemble in a 5:5:2:1:1 stoichiometry; each is associated with a gamma-tubulin, thereby arranging 14 gamma-tubulins in a helical manner. Gamma-tubulin at the first position is blocked by TUBGCP3 at the last position, allowing 13 protafilaments to grow into a microtubule. The gTuRC (via TUBGCP3 and TUBGCP6) interacts with ACTB and MZT1; the interactions form a luminal bridge that stabilizes the initial structure during complex assembly. The gTuRC (via TUBGCP2) interacts with MZT2A/MZT2B and CDK5RAP2 (via CM1 motif); the interactions play a role in gTuRC activation.

The protein resides in the cytoplasm. It localises to the cytoskeleton. The protein localises to the microtubule organizing center. It is found in the centrosome. Its function is as follows. Component of the gamma-tubulin ring complex (gTuRC) which mediates microtubule nucleation. The gTuRC regulates the minus-end nucleation of alpha-beta tubulin heterodimers that grow into microtubule protafilaments, a critical step in centrosome duplication and spindle formation. The protein is Gamma-tubulin complex component 5 (TUBGCP5) of Macaca fascicularis (Crab-eating macaque).